Reading from the N-terminus, the 292-residue chain is Elongation factor Ts (292 aa).

The involved in Mg(2+) ion dislocation from EF-Tu stretch occupies residues 79–82 (TDFV).

Belongs to the EF-Ts family.

It is found in the cytoplasm. In terms of biological role, associates with the EF-Tu.GDP complex and induces the exchange of GDP to GTP. It remains bound to the aminoacyl-tRNA.EF-Tu.GTP complex up to the GTP hydrolysis stage on the ribosome. This is Elongation factor Ts from Xanthomonas axonopodis pv. citri (strain 306).